Reading from the N-terminus, the 1299-residue chain is Protein prickle (1299 aa).

Over residues 1–19 the composition is skewed to gly residues; that stretch reads MSSLSTGGGAGGSSGGPGG. 5 disordered regions span residues 1–24, 115–181, 241–289, 368–396, and 425–527; these read MSSLSTGGGAGGSSGGPGGADAAA, ADDG…EVTQ, EEES…PQVP, LPRHFSPSGQGLATPPALGSGGMGLPSSS, and LPPH…DDDS. The segment covering 145-159 has biased composition (basic residues); it reads SPRRSKKLLRSLRAH. Residues 168-181 show a composition bias toward polar residues; that stretch reads NDTTTANESSEVTQ. The span at 263–272 shows a compositional bias: pro residues; the sequence is PVPPLPPPPA. Residues 425–434 are compositionally biased toward low complexity; it reads LPPHHQQHPG. Residues 435 to 445 show a composition bias toward gly residues; it reads AGMGPGPGSGA. Polar residues predominate over residues 457–469; the sequence is PGCSANPKYSNAQ. A PET domain is found at 515-623; the sequence is MDMQRQSHSD…NVRQLMSARP (109 aa). The span at 516–525 shows a compositional bias: basic and acidic residues; the sequence is DMQRQSHSDD. LIM zinc-binding domains follow at residues 622–686, 687–747, and 748–810; these read RPCD…ETLK, PRCS…MFAE, and YCDY…GEPP. 3 disordered regions span residues 807–865, 902–940, and 1026–1249; these read GEPP…HQAT, KDLEHGGHMGGGDLTDFSGGRASSTSQNLSPLNSPGDFQ, and ADIL…SSSS. Residues 844–864 show a composition bias toward low complexity; the sequence is PSSHASSSPPMSPQQQQQHQA. 2 stretches are compositionally biased toward polar residues: residues 922–934 and 1070–1081; these read RASSTSQNLSPLN and SLNTPMSTQSAS. Positions 1089–1101 are enriched in low complexity; the sequence is SILSGASSSSPMS. Residues 1136–1150 are compositionally biased toward basic and acidic residues; that stretch reads GERERDRDKDKEGGG. A compositionally biased stretch (basic residues) spans 1151–1183; the sequence is RHGHGHSSRRRRRRKSSSSSSHHRSGSGHRSHS. Residues 1216–1231 are compositionally biased toward basic and acidic residues; the sequence is SPSRQQRERERERERE. The segment covering 1238–1249 has biased composition (low complexity); it reads VCSTCSSSSSSS.

It belongs to the prickle / espinas / testin family. As to quaternary structure, interacts with dsh; PET and LIM domains interact with dsh DEP domain, in wing cells. Interacts with Vang in photoreceptor cells. Expressed in the wing, leg and eye imaginal disks. Expressed within the photoreceptors of the eye.

The protein resides in the cell membrane. Its function is as follows. Acts in a planar cell polarity (PCP) complex; polarization along the apical/basal axis of epithelial cells. Correct expression of the alternative isoforms is required for PCP signaling in imaginal disks. PCP signaling in the wing disk requires the receptor fz and the cytoplasmic proteins dsh and pk. These act in a feedback loop leading to activation of the jnk cascade and subsequent polarized arrangement of hairs and bristles. Dgo and pk compete with one another for dsh binding, thereby modulating fz dsh activity and ensuring tight control over fz PCP signaling. Vang, stan and pk function together to regulate the establishment of tissue polarity in the adult eye. This Drosophila melanogaster (Fruit fly) protein is Protein prickle.